Reading from the N-terminus, the 162-residue chain is Succinate dehydrogenase assembly factor 2, mitochondrial (162 aa).

The N-terminal 35 residues, 1-35 (MHNMFPALTKTLSLQGYKIINSQTGSAAWSCGRRW), are a transit peptide targeting the mitochondrion.

It belongs to the SDHAF2 family. Interacts with SDH1 within the SDH catalytic dimer.

Its subcellular location is the mitochondrion matrix. In terms of biological role, plays an essential role in the assembly of succinate dehydrogenase (SDH), an enzyme complex (also referred to as respiratory complex II) that is a component of both the tricarboxylic acid (TCA) cycle and the mitochondrial electron transport chain, and which couples the oxidation of succinate to fumarate with the reduction of ubiquinone (coenzyme Q) to ubiquinol. Required for flavinylation (covalent attachment of FAD) of the flavoprotein subunit SDH1 of the SDH catalytic dimer. It is unclear whether it participates in the chemistry of FAD attachment (enzymatic function) or acts as a chaperone that maintains SDH1 in a conformation that is susceptible to autocatalytic FAD attachment. Does not bind FAD or FADH(2) in vitro. Involved in sporulation. Required for the full activation of the early meiotic inducer IME1. This Saccharomyces cerevisiae (strain ATCC 204508 / S288c) (Baker's yeast) protein is Succinate dehydrogenase assembly factor 2, mitochondrial.